A 316-amino-acid chain; its full sequence is MKARNESMSKGEYKTKSLKNRPDPTQPKLKKPSWIKAKLPSAKHIGRVKELKQVLREQGLNSVCEEASCPNLGECFGHGTATFMIMGHICTRKCPFCDVTHGRPNPLNQDEPRHLAKTIHAMNLNYVVITSVDRDDLRDGGATHFKNCTQAIRDKMPDIQIETLVPDFRGRLTVALDILAQQAPDVLNHNLETVPRLYEEARPGADYQASLDLLKRFKQMVPETKTKSGLMVGLGETFDEILQVMRDLRAHDVEMLTVGQYLQPSDFHLAVQRYWTPEEFKQLEQAGMEMGFTHVASGPMVRSSYHADLQAQGQFS.

The span at 1–15 shows a compositional bias: basic and acidic residues; that stretch reads MKARNESMSKGEYKT. The tract at residues 1–33 is disordered; it reads MKARNESMSKGEYKTKSLKNRPDPTQPKLKKPS. [4Fe-4S] cluster contacts are provided by cysteine 64, cysteine 69, cysteine 75, cysteine 90, cysteine 94, cysteine 97, and serine 304. One can recognise a Radical SAM core domain in the interval 76–293; sequence FGHGTATFMI…EQAGMEMGFT (218 aa).

Belongs to the radical SAM superfamily. Lipoyl synthase family. Requires [4Fe-4S] cluster as cofactor.

It is found in the cytoplasm. The catalysed reaction is [[Fe-S] cluster scaffold protein carrying a second [4Fe-4S](2+) cluster] + N(6)-octanoyl-L-lysyl-[protein] + 2 oxidized [2Fe-2S]-[ferredoxin] + 2 S-adenosyl-L-methionine + 4 H(+) = [[Fe-S] cluster scaffold protein] + N(6)-[(R)-dihydrolipoyl]-L-lysyl-[protein] + 4 Fe(3+) + 2 hydrogen sulfide + 2 5'-deoxyadenosine + 2 L-methionine + 2 reduced [2Fe-2S]-[ferredoxin]. It functions in the pathway protein modification; protein lipoylation via endogenous pathway; protein N(6)-(lipoyl)lysine from octanoyl-[acyl-carrier-protein]: step 2/2. Catalyzes the radical-mediated insertion of two sulfur atoms into the C-6 and C-8 positions of the octanoyl moiety bound to the lipoyl domains of lipoate-dependent enzymes, thereby converting the octanoylated domains into lipoylated derivatives. In Hydrogenovibrio crunogenus (strain DSM 25203 / XCL-2) (Thiomicrospira crunogena), this protein is Lipoyl synthase.